We begin with the raw amino-acid sequence, 440 residues long: Origin recognition complex subunit 4 (440 aa).

Residue 64–71 (GPKGSGKS) coordinates ATP.

Belongs to the ORC4 family. ORC is composed of six subunits.

The protein localises to the nucleus. Component of the origin recognition complex (ORC) that binds origins of replication. DNA-binding is ATP-dependent, however specific DNA sequences that define origins of replication have not been identified so far. ORC is required to assemble the pre-replication complex necessary to initiate DNA replication. In Dictyostelium discoideum (Social amoeba), this protein is Origin recognition complex subunit 4 (orcD).